A 407-amino-acid chain; its full sequence is Peptidase T (407 aa).

Position 82 (H82) interacts with Zn(2+). The active site involves D84. Zn(2+) is bound at residue D143. Residue E177 is the Proton acceptor of the active site. Zn(2+) contacts are provided by E178, D200, and H382.

This sequence belongs to the peptidase M20B family. Requires Zn(2+) as cofactor.

The protein resides in the cytoplasm. The catalysed reaction is Release of the N-terminal residue from a tripeptide.. Cleaves the N-terminal amino acid of tripeptides. The polypeptide is Peptidase T (Streptococcus pyogenes serotype M28 (strain MGAS6180)).